The chain runs to 153 residues: Arachidonate 5-lipoxygenase-activating protein (153 aa).

Residues 1–8 (MDQETVGN) are Lumenal-facing. The helical transmembrane segment at 9–30 (VVLLAIVTLISVIQNGFFAHKV) threads the bilayer. The Cytoplasmic portion of the chain corresponds to 31 to 52 (EHESKTQNGRSFQRTGTLAFER). A helical membrane pass occupies residues 53–77 (VYTANQNCVDAYPTFLVMLWSAGLL). Topologically, residues 78–80 (CSQ) are lumenal. Residues 81–102 (VPAAFAGLMYLFVRQKYFVGYL) form a helical membrane-spanning segment. Residues 103–107 (GERRQ) lie on the Cytoplasmic side of the membrane. Residues 108–115 (STPGYIFG) lie within the membrane without spanning it. A helical membrane pass occupies residues 116-128 (KRIILFLFLMSLA). Topologically, residues 129-153 (GIFNYYLILFFGSDFENYIKTITTT) are lumenal.

It belongs to the MAPEG family. As to quaternary structure, homotrimer. Interacts with LTC4S and ALOX5.

The protein resides in the nucleus membrane. Its subcellular location is the endoplasmic reticulum membrane. Its function is as follows. Required for leukotriene biosynthesis by ALOX5 (5-lipoxygenase). Anchors ALOX5 to the membrane. Binds arachidonic acid, and could play an essential role in the transfer of arachidonic acid to ALOX5. Binds to MK-886, a compound that blocks the biosynthesis of leukotrienes. This Equus caballus (Horse) protein is Arachidonate 5-lipoxygenase-activating protein (ALOX5AP).